A 226-amino-acid polypeptide reads, in one-letter code: PKHD-type hydroxylase Plav_0377 (226 aa).

One can recognise a Fe2OG dioxygenase domain in the interval 78–178 (KVLPPRFNRY…RLASFFWVQS (101 aa)). Residues histidine 96, aspartate 98, and histidine 159 each coordinate Fe cation. Arginine 169 contacts 2-oxoglutarate.

Requires Fe(2+) as cofactor. The cofactor is L-ascorbate.

This is PKHD-type hydroxylase Plav_0377 from Parvibaculum lavamentivorans (strain DS-1 / DSM 13023 / NCIMB 13966).